A 380-amino-acid chain; its full sequence is Magnesium-protoporphyrin IX monomethyl ester [oxidative] cyclase 1 (380 aa).

This sequence belongs to the AcsF family. It depends on Fe cation as a cofactor.

It carries out the reaction Mg-protoporphyrin IX 13-monomethyl ester + 3 NADPH + 3 O2 + 2 H(+) = 3,8-divinyl protochlorophyllide a + 3 NADP(+) + 5 H2O. Its pathway is porphyrin-containing compound metabolism; chlorophyll biosynthesis (light-independent). Its function is as follows. Catalyzes the formation of the isocyclic ring in chlorophyll biosynthesis. Mediates the cyclase reaction, which results in the formation of divinylprotochlorophyllide (Pchlide) characteristic of all chlorophylls from magnesium-protoporphyrin IX 13-monomethyl ester (MgPMME). This chain is Magnesium-protoporphyrin IX monomethyl ester [oxidative] cyclase 1, found in Thermosynechococcus vestitus (strain NIES-2133 / IAM M-273 / BP-1).